A 93-amino-acid chain; its full sequence is MEDFDDLVNRVTPDRPRGWNHLGCDIKKLSQVKSELEQGKALLEEEKKELIEKNSNLNLQISNMNHLKTFKDAIDLVYSNFSKIDIKDEPCLN.

Residues 25-68 are a coiled coil; the sequence is DIKKLSQVKSELEQGKALLEEEKKELIEKNSNLNLQISNMNHLK.

This is an uncharacterized protein from Dictyostelium discoideum (Social amoeba).